Reading from the N-terminus, the 108-residue chain is UPF0145 protein Tmel_1129 (108 aa).

The protein belongs to the UPF0145 family.

This is UPF0145 protein Tmel_1129 from Thermosipho melanesiensis (strain DSM 12029 / CIP 104789 / BI429).